The primary structure comprises 267 residues: Phosphatidylcholine synthase (267 aa).

Topologically, residues 1-42 (MILWRIVRPGAAMAYVQTGLVLIAEAMDTQQDSLKPRPAMRA) are cytoplasmic. A helical membrane pass occupies residues 43-63 (AAFSVHVFTAFGAAIALLAML). Over 64-69 (EAVREH) the chain is Periplasmic. Residues 70–90 (WAAMFQWLGVALIIDAIDGPI) form a helical membrane-spanning segment. The Cytoplasmic portion of the chain corresponds to 91-102 (ARRLDVKNVQPN). A helical transmembrane segment spans residues 103 to 123 (WSGDVLDLVVDFVTYVFVPAY). Ala-124 is a topological domain (periplasmic). Residues 125–145 (IVASGLLLPVAAPLLGVAIIV) traverse the membrane as a helical segment. Residues 146-162 (TSALYFADLRMKADDNH) are Cytoplasmic-facing. The helical transmembrane segment at 163–183 (FRGFPALWNAAAFYLFLLHWP) threads the bilayer. Residue Pro-184 is a topological domain, periplasmic. Residues 185–205 (LWSTLLVAALVVLTFVPFHVL) traverse the membrane as a helical segment. Topologically, residues 206 to 215 (HPVRVVRLRW) are cytoplasmic. The helical transmembrane segment at 216–236 (LTMSLIGIWAVLSLYTLDMDF) threads the bilayer. The Periplasmic portion of the chain corresponds to 237–239 (RVG). The chain crosses the membrane as a helical span at residues 240–260 (PGVTLALCAIALWISFSDALI). Residues 261 to 267 (RFARSFA) are Cytoplasmic-facing.

This sequence belongs to the CDP-alcohol phosphatidyltransferase class-I family. It depends on Mn(2+) as a cofactor.

It is found in the cell inner membrane. The catalysed reaction is a CDP-1,2-diacyl-sn-glycerol + choline = a 1,2-diacyl-sn-glycero-3-phosphocholine + CMP + H(+). In terms of biological role, condenses choline with CDP-diglyceride to produce phosphatidylcholine and CMP. In Bradyrhizobium diazoefficiens (strain JCM 10833 / BCRC 13528 / IAM 13628 / NBRC 14792 / USDA 110), this protein is Phosphatidylcholine synthase.